Here is a 133-residue protein sequence, read N- to C-terminus: Phosphoribosyl-AMP cyclohydrolase (133 aa).

Asp-82 is a binding site for Mg(2+). Zn(2+) is bound at residue Cys-83. Mg(2+)-binding residues include Asp-84 and Asp-86. Residues Cys-100 and Cys-107 each coordinate Zn(2+).

Belongs to the PRA-CH family. As to quaternary structure, homodimer. The cofactor is Mg(2+). It depends on Zn(2+) as a cofactor.

The protein resides in the cytoplasm. The catalysed reaction is 1-(5-phospho-beta-D-ribosyl)-5'-AMP + H2O = 1-(5-phospho-beta-D-ribosyl)-5-[(5-phospho-beta-D-ribosylamino)methylideneamino]imidazole-4-carboxamide. The protein operates within amino-acid biosynthesis; L-histidine biosynthesis; L-histidine from 5-phospho-alpha-D-ribose 1-diphosphate: step 3/9. In terms of biological role, catalyzes the hydrolysis of the adenine ring of phosphoribosyl-AMP. This chain is Phosphoribosyl-AMP cyclohydrolase, found in Aromatoleum aromaticum (strain DSM 19018 / LMG 30748 / EbN1) (Azoarcus sp. (strain EbN1)).